Consider the following 336-residue polypeptide: Anthranilate phosphoribosyltransferase (336 aa).

5-phospho-alpha-D-ribose 1-diphosphate contacts are provided by residues Gly80, 83–84 (GD), Thr88, 90–93 (NIST), 108–116 (KHGNRSITS), and Ser120. Gly80 contributes to the anthranilate binding site. Ser92 is a binding site for Mg(2+). Asn111 provides a ligand contact to anthranilate. Arg166 contacts anthranilate. Positions 224 and 225 each coordinate Mg(2+).

This sequence belongs to the anthranilate phosphoribosyltransferase family. In terms of assembly, homodimer. The cofactor is Mg(2+).

It carries out the reaction N-(5-phospho-beta-D-ribosyl)anthranilate + diphosphate = 5-phospho-alpha-D-ribose 1-diphosphate + anthranilate. Its pathway is amino-acid biosynthesis; L-tryptophan biosynthesis; L-tryptophan from chorismate: step 2/5. Functionally, catalyzes the transfer of the phosphoribosyl group of 5-phosphorylribose-1-pyrophosphate (PRPP) to anthranilate to yield N-(5'-phosphoribosyl)-anthranilate (PRA). This chain is Anthranilate phosphoribosyltransferase, found in Caldicellulosiruptor saccharolyticus (strain ATCC 43494 / DSM 8903 / Tp8T 6331).